The following is a 146-amino-acid chain: MHVLLLNGPNLNLLGQREPGIYGCDTLATIETELTREAKADGVELVCFQSNFEGALIERIHQAMGESQGILINAGAYTHSSIAIRDALTGVAIPYVELHLSNTHAREPFRHQSYLAGRAVGVVSGFGAKSYSLALSGLVHHLRQGG.

Tyrosine 22 (proton acceptor) is an active-site residue. The substrate site is built by asparagine 73, histidine 79, and aspartate 86. Residue histidine 99 is the Proton donor of the active site. Substrate is bound by residues 100–101 and arginine 110; that span reads LS.

This sequence belongs to the type-II 3-dehydroquinase family. In terms of assembly, homododecamer.

It catalyses the reaction 3-dehydroquinate = 3-dehydroshikimate + H2O. It participates in metabolic intermediate biosynthesis; chorismate biosynthesis; chorismate from D-erythrose 4-phosphate and phosphoenolpyruvate: step 3/7. Its function is as follows. Catalyzes a trans-dehydration via an enolate intermediate. This is 3-dehydroquinate dehydratase from Synechococcus sp. (strain CC9902).